We begin with the raw amino-acid sequence, 293 residues long: uncharacterized protein (293 aa).

Disordered stretches follow at residues methionine 1–alanine 95 and glutamate 268–leucine 293. Serine 34, serine 35, and serine 89 each carry phosphoserine. 2 stretches are compositionally biased toward basic and acidic residues: residues lysine 85–alanine 95 and glycine 277–threonine 286.

This is an uncharacterized protein from Rattus norvegicus (Rat).